The primary structure comprises 294 residues: Pyridoxal 5'-phosphate synthase subunit PdxS (294 aa).

Asp24 contacts D-ribose 5-phosphate. The active-site Schiff-base intermediate with D-ribose 5-phosphate is Lys81. Gly153 contacts D-ribose 5-phosphate. Arg165 is a D-glyceraldehyde 3-phosphate binding site. D-ribose 5-phosphate contacts are provided by residues Gly214 and 235–236 (GS).

Belongs to the PdxS/SNZ family. As to quaternary structure, homohexamer and homododecamer. In the presence of PdxT, forms a dodecamer of heterodimers.

The enzyme catalyses aldehydo-D-ribose 5-phosphate + D-glyceraldehyde 3-phosphate + L-glutamine = pyridoxal 5'-phosphate + L-glutamate + phosphate + 3 H2O + H(+). Its pathway is cofactor biosynthesis; pyridoxal 5'-phosphate biosynthesis. In terms of biological role, catalyzes the formation of pyridoxal 5'-phosphate from ribose 5-phosphate (RBP), glyceraldehyde 3-phosphate (G3P) and ammonia. The ammonia is provided by the PdxT subunit. Can also use ribulose 5-phosphate and dihydroxyacetone phosphate as substrates, resulting from enzyme-catalyzed isomerization of RBP and G3P, respectively. This Geobacillus kaustophilus (strain HTA426) protein is Pyridoxal 5'-phosphate synthase subunit PdxS.